The sequence spans 424 residues: Serine--tRNA ligase (424 aa).

230–232 contacts L-serine; the sequence is TAE. An ATP-binding site is contributed by 261-263; the sequence is RSE. E284 contributes to the L-serine binding site. ATP is bound at residue 348 to 351; the sequence is EISS. L-serine is bound at residue S384.

It belongs to the class-II aminoacyl-tRNA synthetase family. Type-1 seryl-tRNA synthetase subfamily. Homodimer. The tRNA molecule binds across the dimer.

The protein localises to the cytoplasm. The catalysed reaction is tRNA(Ser) + L-serine + ATP = L-seryl-tRNA(Ser) + AMP + diphosphate + H(+). It carries out the reaction tRNA(Sec) + L-serine + ATP = L-seryl-tRNA(Sec) + AMP + diphosphate + H(+). It functions in the pathway aminoacyl-tRNA biosynthesis; selenocysteinyl-tRNA(Sec) biosynthesis; L-seryl-tRNA(Sec) from L-serine and tRNA(Sec): step 1/1. Its function is as follows. Catalyzes the attachment of serine to tRNA(Ser). Is also able to aminoacylate tRNA(Sec) with serine, to form the misacylated tRNA L-seryl-tRNA(Sec), which will be further converted into selenocysteinyl-tRNA(Sec). The polypeptide is Serine--tRNA ligase (Streptococcus pneumoniae serotype 19F (strain G54)).